Consider the following 238-residue polypeptide: DNA repair protein RecO (238 aa).

The protein belongs to the RecO family.

Its function is as follows. Involved in DNA repair and RecF pathway recombination. The protein is DNA repair protein RecO of Anaplasma marginale (strain St. Maries).